We begin with the raw amino-acid sequence, 349 residues long: Beta-hexosaminidase (349 aa).

Substrate-binding positions include Asp-64, Arg-72, Arg-138, and 168-169; that span reads KH. The Proton donor/acceptor role is filled by His-181. The active-site Nucleophile is Asp-252.

The protein belongs to the glycosyl hydrolase 3 family. NagZ subfamily.

The protein localises to the cytoplasm. The catalysed reaction is Hydrolysis of terminal non-reducing N-acetyl-D-hexosamine residues in N-acetyl-beta-D-hexosaminides.. It participates in cell wall biogenesis; peptidoglycan recycling. Functionally, plays a role in peptidoglycan recycling by cleaving the terminal beta-1,4-linked N-acetylglucosamine (GlcNAc) from peptide-linked peptidoglycan fragments, giving rise to free GlcNAc, anhydro-N-acetylmuramic acid and anhydro-N-acetylmuramic acid-linked peptides. The chain is Beta-hexosaminidase from Nitrosospira multiformis (strain ATCC 25196 / NCIMB 11849 / C 71).